The sequence spans 249 residues: 2,3-bisphosphoglycerate-dependent phosphoglycerate mutase (249 aa).

Substrate contacts are provided by residues arginine 11–asparagine 18, threonine 24–glycine 25, arginine 63, glutamate 90–tyrosine 93, lysine 101, arginine 117–arginine 118, and glycine 185–asparagine 186. The active-site Tele-phosphohistidine intermediate is histidine 12. Glutamate 90 acts as the Proton donor/acceptor in catalysis.

The protein belongs to the phosphoglycerate mutase family. BPG-dependent PGAM subfamily.

It carries out the reaction (2R)-2-phosphoglycerate = (2R)-3-phosphoglycerate. It functions in the pathway carbohydrate degradation; glycolysis; pyruvate from D-glyceraldehyde 3-phosphate: step 3/5. Catalyzes the interconversion of 2-phosphoglycerate and 3-phosphoglycerate. This is 2,3-bisphosphoglycerate-dependent phosphoglycerate mutase from Leifsonia xyli subsp. xyli (strain CTCB07).